The following is a 210-amino-acid chain: Large ribosomal subunit protein bL25 (210 aa).

Residues 1–23 (MSDIGTLSAKGRDRAGKGAARAT) are disordered.

Belongs to the bacterial ribosomal protein bL25 family. CTC subfamily. In terms of assembly, part of the 50S ribosomal subunit; part of the 5S rRNA/L5/L18/L25 subcomplex. Contacts the 5S rRNA. Binds to the 5S rRNA independently of L5 and L18.

Its function is as follows. This is one of the proteins that binds to the 5S RNA in the ribosome where it forms part of the central protuberance. The protein is Large ribosomal subunit protein bL25 of Rhodospirillum rubrum (strain ATCC 11170 / ATH 1.1.1 / DSM 467 / LMG 4362 / NCIMB 8255 / S1).